Consider the following 338-residue polypeptide: Fructose-1,6-bisphosphatase class 1 1 (338 aa).

Mg(2+) is bound by residues Glu94, Asp116, Leu118, and Asp119. Substrate-binding positions include 119–122, Asn210, and Lys276; that span reads DGSS. Glu282 provides a ligand contact to Mg(2+).

The protein belongs to the FBPase class 1 family. Homotetramer. Requires Mg(2+) as cofactor.

It is found in the cytoplasm. The enzyme catalyses beta-D-fructose 1,6-bisphosphate + H2O = beta-D-fructose 6-phosphate + phosphate. The protein operates within carbohydrate biosynthesis; gluconeogenesis. In Paraburkholderia xenovorans (strain LB400), this protein is Fructose-1,6-bisphosphatase class 1 1.